The following is a 254-amino-acid chain: Ciliary microtubule associated protein 1A (254 aa).

STPGR repeat units lie at residues 180 to 205 (PGPA…MAAR) and 216 to 241 (PGPG…FGIK). Residues 207–226 (EPPGDKTLKPGPGAHSPEKV) form a disordered region.

The protein belongs to the CIMAP family. As to quaternary structure, microtubule inner protein component of sperm flagellar doublet microtubules. As to expression, testis-specific.

It is found in the cytoplasm. The protein localises to the cytoskeleton. The protein resides in the flagellum axoneme. Functionally, outer dense fibers are filamentous structures located on the outside of the axoneme in the midpiece and principal piece of the mammalian sperm tail. May help to maintain the passive elastic structures and elastic recoil of the sperm tail. The sequence is that of Ciliary microtubule associated protein 1A from Homo sapiens (Human).